A 194-amino-acid polypeptide reads, in one-letter code: Probable transcription factor At4g00130 (194 aa).

It belongs to the GeBP family.

In Arabidopsis thaliana (Mouse-ear cress), this protein is Probable transcription factor At4g00130.